Consider the following 211-residue polypeptide: N-(5'-phosphoribosyl)anthranilate isomerase (211 aa).

It belongs to the TrpF family.

It carries out the reaction N-(5-phospho-beta-D-ribosyl)anthranilate = 1-(2-carboxyphenylamino)-1-deoxy-D-ribulose 5-phosphate. It participates in amino-acid biosynthesis; L-tryptophan biosynthesis; L-tryptophan from chorismate: step 3/5. The polypeptide is N-(5'-phosphoribosyl)anthranilate isomerase (Nitrosomonas europaea (strain ATCC 19718 / CIP 103999 / KCTC 2705 / NBRC 14298)).